Consider the following 427-residue polypeptide: Homogentisate 1,2-dioxygenase (427 aa).

The active-site Proton acceptor is His-285. Residues His-328 and Glu-334 each contribute to the Fe cation site. Residues Tyr-343 and His-364 each coordinate homogentisate. Residue His-364 coordinates Fe cation.

It belongs to the homogentisate dioxygenase family. As to quaternary structure, hexamer; dimer of trimers. Fe cation is required as a cofactor.

The catalysed reaction is homogentisate + O2 = 4-maleylacetoacetate + H(+). It functions in the pathway amino-acid degradation; L-phenylalanine degradation; acetoacetate and fumarate from L-phenylalanine: step 4/6. Functionally, involved in the catabolism of homogentisate (2,5-dihydroxyphenylacetate or 2,5-OH-PhAc), a central intermediate in the degradation of phenylalanine and tyrosine. Catalyzes the oxidative ring cleavage of the aromatic ring of homogentisate to yield maleylacetoacetate. In Caulobacter sp. (strain K31), this protein is Homogentisate 1,2-dioxygenase.